The primary structure comprises 544 residues: Lariat debranching enzyme (544 aa).

C8, H10, D39, and N84 together coordinate a divalent metal cation. The segment at 124–154 (SGIFKSHDYRKGHFECPPYNSSTIRSIYHVR) is lariat recognition loop. K128 is subject to N6-acetyllysine. Residues H174, H226, and H228 each coordinate a divalent metal cation. The span at 395–412 (EYEEQDDVESNDSGEDQS) shows a compositional bias: acidic residues. Residues 395 to 463 (EYEEQDDVES…PSDQASEFSA (69 aa)) are disordered. Polar residues predominate over residues 413–425 (EYNTDTSALSSIN). Residues 429 to 439 (IMLDEEEDEDS) show a composition bias toward acidic residues. Polar residues predominate over residues 445–463 (SGMNTPSVEPSDQASEFSA). 7 positions are modified to phosphoserine: S464, S474, S478, S479, S485, S499, and S514. The tract at residues 476 to 544 (IVSSDDTVDS…AVDDDDDDAA (69 aa)) is disordered. The span at 512-522 (RLSDEHEPEQR) shows a compositional bias: basic and acidic residues.

Belongs to the lariat debranching enzyme family. Fe(2+) is required as a cofactor. Requires Zn(2+) as cofactor. It depends on Mn(2+) as a cofactor. Ubiquitously expressed, strongest expression in the spinal cord and brainstem.

Its subcellular location is the nucleus. With respect to regulation, active in presence of diverse metals including Fe(2+), Zn(2+), Mn(2+). Also activated by Ca(2+). Binds two metal cations in two adjacent alpha and beta metal-binding pockets. Cleaves the 2'-5' phosphodiester linkage at the branch point of excised lariat intron RNA and converts them into linear molecules that can be subsequently degraded, thereby facilitating ribonucleotide turnover. Linked to its role in pre-mRNA processing mechanism, may also participate in retrovirus replication via an RNA lariat intermediate in cDNA synthesis and have an antiviral cell-intrinsic defense function in the brainstem. In Homo sapiens (Human), this protein is Lariat debranching enzyme (DBR1).